Reading from the N-terminus, the 446-residue chain is RUN domain-containing protein 3A (446 aa).

Residues 1 to 298 form an interaction with RAP2A region; it reads METSFVQTTM…LQLQLEEAAA (298 aa). Residues 52 to 189 form the RUN domain; it reads DDSSEEFVNF…IDFSFCLKGE (138 aa). A Phosphothreonine modification is found at threonine 215. Residues 216-239 are disordered; it reads DEEERHSAESSTSEDNSPEHPYLP. Serine 232 is subject to Phosphoserine. A coiled-coil region spans residues 267–322; it reads YLEELVRLRESQLKDLEAENRRLQLQLEEAAAQNQREKRELEGVILELQEQLTGLI. Positions 372-384 are enriched in polar residues; sequence PLSAEASLSSDSQ. Residues 372–404 are disordered; that stretch reads PLSAEASLSSDSQRLGEGTRDEEPWGPIGKDPT. Residues serine 416 and serine 419 each carry the phosphoserine modification.

It belongs to the RUNDC3 family. Interacts with the GTP-bound form of RAP2A.

In terms of biological role, may act as an effector of RAP2A in neuronal cells. The protein is RUN domain-containing protein 3A (RUNDC3A) of Pongo abelii (Sumatran orangutan).